A 67-amino-acid chain; its full sequence is Mu-conotoxin TsIIIA (67 aa).

The signal sequence occupies residues 1–20 (MMSKLGVLLTICLLLFPLTA). A propeptide spanning residues 21 to 48 (VPLDGDQPADQPAERKQNEQHPLFDQKR) is cleaved from the precursor. 3 cysteine pairs are disulfide-bonded: C50–C59, C51–C64, and C55–C65.

This sequence belongs to the conotoxin M superfamily. As to expression, expressed by the venom duct.

Its subcellular location is the secreted. Mu-conotoxins block voltage-gated sodium channels (Nav). This toxin specifically inhibits mammalian Nav1.8/SCN10A sodium currents (IC(50)=2.11 uM) without inducing a shift in the current-voltage relationship of this channel. In vivo, shows potent analgesic activity in a mice hotplate analgesic assay. In addition, this toxin has better analgesic effects than Ziconotide, an analgesic drug. The chain is Mu-conotoxin TsIIIA from Conus tessulatus (Tessellate cone).